Reading from the N-terminus, the 180-residue chain is Translation initiation factor IF-3 (180 aa).

The protein belongs to the IF-3 family. As to quaternary structure, monomer.

The protein resides in the cytoplasm. Functionally, IF-3 binds to the 30S ribosomal subunit and shifts the equilibrium between 70S ribosomes and their 50S and 30S subunits in favor of the free subunits, thus enhancing the availability of 30S subunits on which protein synthesis initiation begins. In Klebsiella pneumoniae, this protein is Translation initiation factor IF-3.